The chain runs to 192 residues: Probable nicotinate-nucleotide adenylyltransferase (192 aa).

The protein belongs to the NadD family.

The enzyme catalyses nicotinate beta-D-ribonucleotide + ATP + H(+) = deamido-NAD(+) + diphosphate. Its pathway is cofactor biosynthesis; NAD(+) biosynthesis; deamido-NAD(+) from nicotinate D-ribonucleotide: step 1/1. In terms of biological role, catalyzes the reversible adenylation of nicotinate mononucleotide (NaMN) to nicotinic acid adenine dinucleotide (NaAD). The chain is Probable nicotinate-nucleotide adenylyltransferase from Bradyrhizobium sp. (strain BTAi1 / ATCC BAA-1182).